The following is a 74-amino-acid chain: Conotoxin AbVIH (74 aa).

The signal sequence occupies residues 1–17 (VLIIAVLFLTACQLTTA). Positions 18–40 (ETSSRGKQKHRALRSTDKDSRMT) are excised as a propeptide. The disordered stretch occupies residues 19–40 (TSSRGKQKHRALRSTDKDSRMT). Intrachain disulfides connect Cys43–Cys57, Cys50–Cys61, and Cys56–Cys68.

This sequence belongs to the conotoxin O1 superfamily. Expressed by the venom duct.

The protein localises to the secreted. The protein is Conotoxin AbVIH of Conus abbreviatus (Abbreviated cone).